We begin with the raw amino-acid sequence, 492 residues long: Putative methyl-accepting chemotaxis AlkN (492 aa).

A run of 2 helical transmembrane segments spans residues 9-29 (FFLI…GMRL) and 159-179 (YVYF…FLLM). An HAMP domain is found at 180 to 231 (KKTRSSIDEIVHVMNDMSRGDLTYRTIPSNDEVGKMQSSIIAMGAGVSALIE). The 237-residue stretch at 236–472 (IQGDLFNSAG…DMLDNANIIR (237 aa)) folds into the Methyl-accepting transducer domain.

The protein belongs to the methyl-accepting chemotaxis (MCP) protein family.

It localises to the membrane. It functions in the pathway hydrocarbon metabolism; alkane degradation. In terms of biological role, chemotactic-signal transducers respond to changes in the concentration of attractants and repellents in the environment, transduce a signal from the outside to the inside of the cell, and facilitate sensory adaptation through the variation of the level of methylation. In Ectopseudomonas oleovorans (Pseudomonas oleovorans), this protein is Putative methyl-accepting chemotaxis AlkN (alkN).